The following is a 133-amino-acid chain: UPF0102 protein Anae109_1947 (133 aa).

Belongs to the UPF0102 family.

In Anaeromyxobacter sp. (strain Fw109-5), this protein is UPF0102 protein Anae109_1947.